The sequence spans 170 residues: TFIIB-type zinc finger protein (170 aa).

The segment at 1 to 30 (MECPVCGSNEIVWDNKNGEVVCSNCGIIID) adopts a TFIIB-type zinc-finger fold. Residues cysteine 3, cysteine 6, cysteine 22, and cysteine 25 each contribute to the Zn(2+) site.

It belongs to the TFIIB family. Requires Zn(2+) as cofactor.

The chain is TFIIB-type zinc finger protein from Saccharolobus shibatae (strain ATCC 51178 / DSM 5389 / JCM 8931 / NBRC 15437 / B12) (Sulfolobus shibatae).